A 346-amino-acid polypeptide reads, in one-letter code: Aspartate-semialdehyde dehydrogenase (346 aa).

NADP(+) is bound by residues 10–13 (TGQG) and 38–39 (RS). Residue Arg-98 participates in phosphate binding. The active-site Acyl-thioester intermediate is Cys-131. Substrate is bound at residue Gln-158. An NADP(+)-binding site is contributed by 161-162 (SG). Lys-228 serves as a coordination point for phosphate. Arg-250 lines the substrate pocket. Residue His-257 is the Proton acceptor of the active site. Asn-326 is an NADP(+) binding site.

It belongs to the aspartate-semialdehyde dehydrogenase family. Homodimer.

It catalyses the reaction L-aspartate 4-semialdehyde + phosphate + NADP(+) = 4-phospho-L-aspartate + NADPH + H(+). Its pathway is amino-acid biosynthesis; L-lysine biosynthesis via DAP pathway; (S)-tetrahydrodipicolinate from L-aspartate: step 2/4. The protein operates within amino-acid biosynthesis; L-methionine biosynthesis via de novo pathway; L-homoserine from L-aspartate: step 2/3. It functions in the pathway amino-acid biosynthesis; L-threonine biosynthesis; L-threonine from L-aspartate: step 2/5. Catalyzes the NADPH-dependent formation of L-aspartate-semialdehyde (L-ASA) by the reductive dephosphorylation of L-aspartyl-4-phosphate. The protein is Aspartate-semialdehyde dehydrogenase of Mycolicibacterium smegmatis (Mycobacterium smegmatis).